The sequence spans 24 residues: EDGYLLNRDTGCKVSCGTCRYCND.

Residues 1–24 form the LCN-type CS-alpha/beta domain; that stretch reads EDGYLLNRDTGCKVSCGTCRYCND.

It belongs to the long (4 C-C) scorpion toxin superfamily. Sodium channel inhibitor family. Alpha subfamily. As to expression, expressed by the venom gland.

The protein resides in the secreted. Functionally, binds to sodium channels (Nav) and inhibits the inactivation of the activated channels, thereby blocking neuronal transmission. This toxin is active against mammals. In Hottentotta tamulus (Eastern Indian scorpion), this protein is Neurotoxin-2.